The following is a 349-amino-acid chain: S-adenosylmethionine:tRNA ribosyltransferase-isomerase (349 aa).

This sequence belongs to the QueA family. As to quaternary structure, monomer.

It is found in the cytoplasm. The catalysed reaction is 7-aminomethyl-7-carbaguanosine(34) in tRNA + S-adenosyl-L-methionine = epoxyqueuosine(34) in tRNA + adenine + L-methionine + 2 H(+). Its pathway is tRNA modification; tRNA-queuosine biosynthesis. Functionally, transfers and isomerizes the ribose moiety from AdoMet to the 7-aminomethyl group of 7-deazaguanine (preQ1-tRNA) to give epoxyqueuosine (oQ-tRNA). In Pseudomonas putida (strain GB-1), this protein is S-adenosylmethionine:tRNA ribosyltransferase-isomerase.